Here is a 90-residue protein sequence, read N- to C-terminus: Conotoxin ba9a (90 aa).

Positions 1-27 (MHLSLARSAGLMWLLLFAVGNFVGVQP) are cleaved as a signal peptide. The propeptide occupies 28 to 62 (GQITRDVDNGQLADNRRNLQSLRKPMTLFKSLNKR). 4-carboxyglutamate is present on Glu-67. 2 positions are modified to 4-hydroxyproline: Pro-76 and Pro-80.

Expressed by the venom duct.

The protein resides in the secreted. The chain is Conotoxin ba9a from Conus bayani (Bayan's cone).